Reading from the N-terminus, the 465-residue chain is Nuclear pore complex protein NUP50B (465 aa).

Disordered stretches follow at residues 1-44 and 59-244; these read MGDS…TFNT and RRTD…FHQH. At Gly2 the chain carries N-acetylglycine. Acidic residues predominate over residues 26–35; that stretch reads GLDDDDEDTS. A compositionally biased stretch (low complexity) spans 81–97; it reads PFTAPAPSTAAAETTKP. Basic and acidic residues-rich tracts occupy residues 105 to 127, 141 to 157, and 216 to 233; these read TLAD…KSDA, ISAK…KEMS, and TEKE…EKNG. Position 125 is a phosphoserine (Ser125). A run of 3 repeats spans residues 266–267, 286–287, and 297–298. Residues 266 to 298 form a 3 X 2 AA repeats of F-G region; it reads FGLVPQEGSTGSGSEQSSFSFGQANNGNSSLFG. Disordered regions lie at residues 308–330 and 439–465; these read KSTE…GEEN and HKDS…AEDA. At Thr455 the chain carries Phosphothreonine. Over residues 456–465 the composition is skewed to polar residues; sequence PENSPSAEDA. At Ser459 the chain carries Phosphoserine.

As to quaternary structure, part of the nuclear pore complex (NPC). The NPC has an eight-fold symmetrical structure comprising a central transport channel and two rings, the cytoplasmic and nuclear rings, to which eight filaments are attached. The cytoplasmic filaments have loose ends, while the nuclear filaments are joined in a distal ring, forming a nuclear basket. NPCs are highly dynamic in configuration and composition, and can be devided in 3 subcomplexes, the NUP62 subcomplex, the NUP107-160 subcomplex and the NUP93 subcomplex, containing approximately 30 different nucleoporin proteins.

Its subcellular location is the nucleus. It localises to the nucleoplasm. It is found in the nuclear pore complex. In terms of biological role, probably involved in nucleocytoplasmic transport via its interactions with importins and Ran, rather than by forming part of the nuclear pore complex (NPC) scaffolding. The chain is Nuclear pore complex protein NUP50B from Arabidopsis thaliana (Mouse-ear cress).